A 370-amino-acid chain; its full sequence is Cathepsin B-like cysteine proteinase 3 (370 aa).

A signal peptide spans Met-1–Ala-16. A propeptide spanning residues Phe-17–Pro-91 is cleaved from the precursor. Disulfide bonds link Cys-105–Cys-134, Cys-117–Cys-162, Cys-153–Cys-210, Cys-154–Cys-158, Cys-190–Cys-214, and Cys-198–Cys-202. Cys-120 is an active-site residue. A glycan (N-linked (GlcNAc...) asparagine) is linked at Asn-138. Catalysis depends on residues His-284 and Asn-304.

Belongs to the peptidase C1 family.

In Caenorhabditis elegans, this protein is Cathepsin B-like cysteine proteinase 3 (cpr-3).